A 489-amino-acid polypeptide reads, in one-letter code: MTFRHCVAVDLGASSGRVMLARYDSKHRTLTLREIHRFVNCLQKTDGFDTWDIDSLEKDIRLGLKKVCNEGILIDSIGIDTWGVDYVLLDKQGQRVGLPVSYRDNRTTGIMPQALVQIGKSEIYRRSGIQFLPFNTIYQLRALTKQQPELTAQVAHALLMPDYFSYRLTGEMNWEYTNATTTQLVNINTDDWDDTLLAWTGAKKSWFGRPSHPGNVIGDWICPQGNRIPVVAVASHDTASAVIASPLANKHSAYLSSGTWSLMGFESKKPYTTDEALAANITNEGGAEGRYRVLKNIMGLWLLQRVLKERRITDLPALIAQTEALPACRFLINPNDDRFINPDDMHAEIQAACRETDQPVPVSDAELARCIFDSLALLYADILHELANLRGEKFTQLHIVGGGCQNALLNQLCADACGIRVMAGPVEASTLGNIGIQLMTLDELNNIDDFRQVVSANYDLTTYIPNPDSEIARHVAQFQPKRQTKELCA.

Position 13–17 (13–17) interacts with ATP; it reads ASSGR. An intrachain disulfide couples cysteine 68 to cysteine 222. Residues glycine 83 and 236-238 each bind substrate; that span reads HDT. Catalysis depends on aspartate 237, which acts as the Proton acceptor. Threonine 259 is a binding site for ATP. Asparagine 296 contributes to the substrate binding site. Glutamine 304 is an ATP binding site. Cysteine 353 and cysteine 370 are oxidised to a cystine. ATP is bound at residue glycine 402. Cysteines 413 and 417 form a disulfide.

Belongs to the rhamnulokinase family. It depends on Mg(2+) as a cofactor.

The catalysed reaction is L-rhamnulose + ATP = L-rhamnulose 1-phosphate + ADP + H(+). The protein operates within carbohydrate degradation; L-rhamnose degradation; glycerone phosphate from L-rhamnose: step 2/3. Functionally, involved in the catabolism of L-rhamnose (6-deoxy-L-mannose). Catalyzes the transfer of the gamma-phosphate group from ATP to the 1-hydroxyl group of L-rhamnulose to yield L-rhamnulose 1-phosphate. The polypeptide is Rhamnulokinase (Salmonella paratyphi A (strain AKU_12601)).